A 552-amino-acid chain; its full sequence is Acyl-CoA synthetase FUM10 (552 aa).

An AMP-binding site is contributed by 183 to 194 (ELFTSGTTGAPK). Positions 463-536 (EIEHVARLHD…QEIPYNRTGK (74 aa)) are AMP-binding.

This sequence belongs to the ATP-dependent AMP-binding enzyme family.

The protein operates within mycotoxin biosynthesis. Acyl-CoA synthetase; part of the gene cluster that mediates the biosynthesis of fumonisins B1 (FB1), B2 (FB2), B3 (FB3), and B4 (FB4), which are carcinogenic mycotoxins. Within the pathway, FUM10 is involved the addition of the tricarballylic moieties to the carbon backbone. FUM10 catalyzes the CoA activation of citrate to form tricarballylic acid. The biosynthesis starts with the FUM1-catalyzed carbon chain assembly from one molecule of acetyl-CoA, eight molecules of malonyl-CoA, and two molecules of methionine (in S-adenosyl form). The C18 polyketide chain is released from the enzyme by a nucleophilic attack of a carbanion, which is derived from R-carbon of alanine by decarboxylation, on the carbonyl carbon of polyketide acyl chain. This step is catalyzed by the pyridoxal 5'-phosphate-dependent aminoacyl transferase FUM8. The resultant 3-keto intermediate is then stereospecifically reduced to a 3-hydroxyl product by reductase FUM13. Subsequent oxidations at C-10 by the cytochrome P450 monooxygenase FUM2, C-14 and C-15 by FUM6, FUM12 or FUM15, tricarballylic esterification of the hydroxyl groups on C-14 and C-15 by acyltransferase FUM14, and C-5 hydroxylation by 2-keto-glutarate-dependent dioxygenase FUM3 furnish the biosynthesis of fumonisins. The tricarballylic moieties are most likely derived from the citric acid cycle, and their addition to the carbon backbone may involve FUM7, FUM10, FUM11 and FUM14. The sequence is that of Acyl-CoA synthetase FUM10 from Gibberella moniliformis (strain M3125 / FGSC 7600) (Maize ear and stalk rot fungus).